The chain runs to 433 residues: 3-phosphoshikimate 1-carboxyvinyltransferase (433 aa).

Positions 22, 23, and 27 each coordinate 3-phosphoshikimate. Residue K22 participates in phosphoenolpyruvate binding. Phosphoenolpyruvate-binding residues include G95 and R123. 3-phosphoshikimate is bound by residues S167, Q169, D315, and K342. Residue Q169 participates in phosphoenolpyruvate binding. D315 functions as the Proton acceptor in the catalytic mechanism. Phosphoenolpyruvate is bound by residues R346 and R387.

It belongs to the EPSP synthase family. In terms of assembly, monomer.

Its subcellular location is the cytoplasm. The catalysed reaction is 3-phosphoshikimate + phosphoenolpyruvate = 5-O-(1-carboxyvinyl)-3-phosphoshikimate + phosphate. It participates in metabolic intermediate biosynthesis; chorismate biosynthesis; chorismate from D-erythrose 4-phosphate and phosphoenolpyruvate: step 6/7. Catalyzes the transfer of the enolpyruvyl moiety of phosphoenolpyruvate (PEP) to the 5-hydroxyl of shikimate-3-phosphate (S3P) to produce enolpyruvyl shikimate-3-phosphate and inorganic phosphate. In Legionella pneumophila (strain Corby), this protein is 3-phosphoshikimate 1-carboxyvinyltransferase.